The chain runs to 328 residues: L-tyrosine isonitrile synthase (328 aa).

It belongs to the isocyanide synthase family. As to quaternary structure, monomer in solution.

It catalyses the reaction D-ribulose 5-phosphate + L-tyrosine = (2S)-3-(4-hydroxyphenyl)-2-isocyanopropanoate + hydroxyacetone + formaldehyde + phosphate + H2O + H(+). Its function is as follows. Involved in the biosynthesis of paerucumarin, a cyclized isocyano derivative of tyrosine. Responsible for the synthesis of the isonitrile group on tyrosine using the C2 of ribulose 5-phosphate as the source of the carbon atom. In Pseudomonas aeruginosa (strain ATCC 15692 / DSM 22644 / CIP 104116 / JCM 14847 / LMG 12228 / 1C / PRS 101 / PAO1), this protein is L-tyrosine isonitrile synthase.